Reading from the N-terminus, the 345-residue chain is Eukaryotic translation initiation factor 3 subunit F (345 aa).

The 137-residue stretch at V30 to G166 folds into the MPN domain. The tract at residues E310–A345 is disordered. A compositionally biased stretch (low complexity) spans A312–G321. Gly residues predominate over residues Q322–G331. The span at T335–A345 shows a compositional bias: basic and acidic residues.

Belongs to the eIF-3 subunit F family. Component of the eukaryotic translation initiation factor 3 (eIF-3) complex.

The protein localises to the cytoplasm. Component of the eukaryotic translation initiation factor 3 (eIF-3) complex, which is involved in protein synthesis of a specialized repertoire of mRNAs and, together with other initiation factors, stimulates binding of mRNA and methionyl-tRNAi to the 40S ribosome. The eIF-3 complex specifically targets and initiates translation of a subset of mRNAs involved in cell proliferation. The polypeptide is Eukaryotic translation initiation factor 3 subunit F (Aspergillus fumigatus (strain CBS 144.89 / FGSC A1163 / CEA10) (Neosartorya fumigata)).